The sequence spans 376 residues: MHIVADENIPLLDEFFAAFGSIRRLPGRGISAADVRDADLLLVRSVTQVNRALLEGSRVRFVGTCTIGTDHLDLDYFAEAGIAWSSAPGCNARGVVDYVLGSVLTLAEREGVDPAARVYGVVGAGQVGGRLVHLLRGLGWQVRVCDPPRQAAEGGDFVSLERIIEECDVISLHTPLDASTRHLFDATRLAALQPGAWLINASRGAVVDNAALRTLLPQRPDLKVVLDVWEGEPQADVELAALCQLATPHIAGYSLDGKLRGTAQIYQACCRVLGLPEQVSLDELLPAPWLSEMSIDSSADPAWVLASLCRAVYDPRRDDADFRRSLVGDADARRAAFDRLRKHYPMRREIDGLRVRIQGDAPQLAALVRALGAATT.

S45 and T66 together coordinate substrate. Residues 126–127 (QV), D146, T174, 201–203 (ASR), and D227 contribute to the NAD(+) site. The active site involves R203. Residue E232 is part of the active site. H249 serves as the catalytic Proton donor. NAD(+) is bound at residue G252. Y253 contacts substrate.

This sequence belongs to the D-isomer specific 2-hydroxyacid dehydrogenase family. PdxB subfamily. Homodimer.

The protein localises to the cytoplasm. The enzyme catalyses 4-phospho-D-erythronate + NAD(+) = (R)-3-hydroxy-2-oxo-4-phosphooxybutanoate + NADH + H(+). Its pathway is cofactor biosynthesis; pyridoxine 5'-phosphate biosynthesis; pyridoxine 5'-phosphate from D-erythrose 4-phosphate: step 2/5. In terms of biological role, catalyzes the oxidation of erythronate-4-phosphate to 3-hydroxy-2-oxo-4-phosphonooxybutanoate. The sequence is that of Erythronate-4-phosphate dehydrogenase from Ectopseudomonas mendocina (strain ymp) (Pseudomonas mendocina).